Reading from the N-terminus, the 281-residue chain is Protein synthesis inhibitor I (281 aa).

Alanine 2 bears the N-acetylalanine mark. Glutamate 175 is an active-site residue.

The protein belongs to the ribosome-inactivating protein family. Type 1 RIP subfamily.

It localises to the cytoplasm. It catalyses the reaction Endohydrolysis of the N-glycosidic bond at one specific adenosine on the 28S rRNA.. Its function is as follows. Inhibits the elongation phase of protein synthesis. It inactivates fungal ribosomes even more effectively than mammalian ribosomes and is thought to function as a constitutive antifungal agent in plants. The polypeptide is Protein synthesis inhibitor I (RIP30) (Hordeum vulgare (Barley)).